The following is a 279-amino-acid chain: MNVLQAPFVEEMVKTTKNLYRLGWDERNGGNISYLLKEEEILPFLNPTQVLRKIPMKFDATKLAGKYFIVTGSGKYFKNVCDASSENLGILRVSENGQELELLWGLEDEAVPTSELPSHFMSHIARLAVDPENRIVMHNHASHLLAMSFTHELDEKVFTRTLWQMCTECLVVFPDGVGIIPWLVPGTNEIGVATAEKMKESRLVLWPQHGIYGTGRDMDEVFGLIETAEKAAEVYTYVCAQGGVRQTISDADLWRLAEAFGVTPKVGYLEEKVSKRRKL.

Glu-115 is a catalytic residue. Zn(2+)-binding residues include His-138, His-140, and His-209.

The protein belongs to the aldolase class II family. RhaD subfamily. Zn(2+) serves as cofactor.

It localises to the cytoplasm. It carries out the reaction L-rhamnulose 1-phosphate = (S)-lactaldehyde + dihydroxyacetone phosphate. The protein operates within carbohydrate degradation; L-rhamnose degradation; glycerone phosphate from L-rhamnose: step 3/3. Its function is as follows. Catalyzes the reversible cleavage of L-rhamnulose-1-phosphate to dihydroxyacetone phosphate (DHAP) and L-lactaldehyde. This chain is Rhamnulose-1-phosphate aldolase, found in Enterococcus faecalis (strain ATCC 700802 / V583).